Reading from the N-terminus, the 186-residue chain is Elongation factor P (186 aa).

It belongs to the elongation factor P family.

Its subcellular location is the cytoplasm. Its pathway is protein biosynthesis; polypeptide chain elongation. Involved in peptide bond synthesis. Stimulates efficient translation and peptide-bond synthesis on native or reconstituted 70S ribosomes in vitro. Probably functions indirectly by altering the affinity of the ribosome for aminoacyl-tRNA, thus increasing their reactivity as acceptors for peptidyl transferase. This is Elongation factor P from Streptococcus thermophilus (strain CNRZ 1066).